We begin with the raw amino-acid sequence, 310 residues long: Protein YIP5 (310 aa).

Residues 1–84 (MPSNNSSFLD…VIGQNDNDGL (84 aa)) form a disordered region. Positions 10–22 (DIDDDLEGVDDFG) are enriched in acidic residues. A compositionally biased stretch (polar residues) spans 35-57 (DSPNMNNSTAGKGSEFYNTTGSK). Position 60 is a phosphoserine (S60). 5 helical membrane passes run 131 to 151 (TDLYGAVWITATVVMINFTMS), 181 to 201 (LHSIWLFYGYTFGVPFITMQV), 220 to 240 (LISVYGYANLIWIPVCVILNI), 249 to 269 (TVQAIQWAIVALGWAQSSYFL), and 290 to 310 (SIIVVVALHTLFCLLFRFIIF).

The protein belongs to the YIP1 family. As to quaternary structure, interacts with SNX3, TVP18, TVP23, YIP1 and YIP4. Interacts with SEC4; The C-terminal cysteines in the Rab GTPase SEC4 are essential for the interaction. Interacts with YPT1, YPT6, YPT7, YPT10, YPT11, YPT31, YPT32 and YPT52; These proteins are all Rab GTPases.

It localises to the membrane. In terms of biological role, possible role in vesicle-mediated transport. May be involved in proper membrane localization of Rab GTPases. This is Protein YIP5 (YIP5) from Saccharomyces cerevisiae (strain ATCC 204508 / S288c) (Baker's yeast).